A 364-amino-acid chain; its full sequence is Chorismate synthase (364 aa).

Residues 41-60 form a disordered region; the sequence is MQHDLDRRRPGTSRYTTARR. NADP(+)-binding residues include R48 and R54. FMN contacts are provided by residues 125 to 127, 238 to 239, G278, 293 to 297, and R319; these read RSS, NA, and KPTSS.

This sequence belongs to the chorismate synthase family. Homotetramer. The cofactor is FMNH2.

It carries out the reaction 5-O-(1-carboxyvinyl)-3-phosphoshikimate = chorismate + phosphate. It functions in the pathway metabolic intermediate biosynthesis; chorismate biosynthesis; chorismate from D-erythrose 4-phosphate and phosphoenolpyruvate: step 7/7. Catalyzes the anti-1,4-elimination of the C-3 phosphate and the C-6 proR hydrogen from 5-enolpyruvylshikimate-3-phosphate (EPSP) to yield chorismate, which is the branch point compound that serves as the starting substrate for the three terminal pathways of aromatic amino acid biosynthesis. This reaction introduces a second double bond into the aromatic ring system. The chain is Chorismate synthase from Shewanella putrefaciens (strain CN-32 / ATCC BAA-453).